The chain runs to 192 residues: Phosphoheptose isomerase (192 aa).

An SIS domain is found at Leu37–Lys192. Residue Asn52 to Gly54 participates in substrate binding. Residues His61 and Glu65 each contribute to the Zn(2+) site. Substrate contacts are provided by residues Glu65, Asn93–Asp94, Ser119–Ser121, Ser124, and Gln172. Zn(2+) is bound by residues Gln172 and His180.

It belongs to the SIS family. GmhA subfamily. As to quaternary structure, homotetramer. Zn(2+) serves as cofactor.

The protein resides in the cytoplasm. It carries out the reaction 2 D-sedoheptulose 7-phosphate = D-glycero-alpha-D-manno-heptose 7-phosphate + D-glycero-beta-D-manno-heptose 7-phosphate. It participates in carbohydrate biosynthesis; D-glycero-D-manno-heptose 7-phosphate biosynthesis; D-glycero-alpha-D-manno-heptose 7-phosphate and D-glycero-beta-D-manno-heptose 7-phosphate from sedoheptulose 7-phosphate: step 1/1. In terms of biological role, catalyzes the isomerization of sedoheptulose 7-phosphate in D-glycero-D-manno-heptose 7-phosphate. This chain is Phosphoheptose isomerase, found in Escherichia fergusonii (strain ATCC 35469 / DSM 13698 / CCUG 18766 / IAM 14443 / JCM 21226 / LMG 7866 / NBRC 102419 / NCTC 12128 / CDC 0568-73).